We begin with the raw amino-acid sequence, 105 residues long: uncharacterized protein (105 aa).

2 helical membrane-spanning segments follow: residues 56–76 and 85–105; these read ALIWSRKAIMRLIGLVVVLII and INLNPYLVWVITTLILMGVFY.

It localises to the membrane. This is an uncharacterized protein from Aedes vexans (Inland floodwater mosquito).